A 231-amino-acid chain; its full sequence is 5'-methylthioadenosine/S-adenosylhomocysteine nucleosidase (231 aa).

The Proton acceptor role is filled by Glu-12. Residues Gly-78, Val-153, and 174–175 (ME) each bind substrate. Asp-198 functions as the Proton donor in the catalytic mechanism.

It belongs to the PNP/UDP phosphorylase family. MtnN subfamily.

It carries out the reaction S-adenosyl-L-homocysteine + H2O = S-(5-deoxy-D-ribos-5-yl)-L-homocysteine + adenine. It catalyses the reaction S-methyl-5'-thioadenosine + H2O = 5-(methylsulfanyl)-D-ribose + adenine. The catalysed reaction is 5'-deoxyadenosine + H2O = 5-deoxy-D-ribose + adenine. Its pathway is amino-acid biosynthesis; L-methionine biosynthesis via salvage pathway; S-methyl-5-thio-alpha-D-ribose 1-phosphate from S-methyl-5'-thioadenosine (hydrolase route): step 1/2. Catalyzes the irreversible cleavage of the glycosidic bond in both 5'-methylthioadenosine (MTA) and S-adenosylhomocysteine (SAH/AdoHcy) to adenine and the corresponding thioribose, 5'-methylthioribose and S-ribosylhomocysteine, respectively. Also cleaves 5'-deoxyadenosine, a toxic by-product of radical S-adenosylmethionine (SAM) enzymes, into 5-deoxyribose and adenine. This Vibrio campbellii (strain ATCC BAA-1116) protein is 5'-methylthioadenosine/S-adenosylhomocysteine nucleosidase.